A 498-amino-acid polypeptide reads, in one-letter code: Aspartyl/glutamyl-tRNA(Asn/Gln) amidotransferase subunit B (498 aa).

Belongs to the GatB/GatE family. GatB subfamily. As to quaternary structure, heterotrimer of A, B and C subunits.

It catalyses the reaction L-glutamyl-tRNA(Gln) + L-glutamine + ATP + H2O = L-glutaminyl-tRNA(Gln) + L-glutamate + ADP + phosphate + H(+). It carries out the reaction L-aspartyl-tRNA(Asn) + L-glutamine + ATP + H2O = L-asparaginyl-tRNA(Asn) + L-glutamate + ADP + phosphate + 2 H(+). Its function is as follows. Allows the formation of correctly charged Asn-tRNA(Asn) or Gln-tRNA(Gln) through the transamidation of misacylated Asp-tRNA(Asn) or Glu-tRNA(Gln) in organisms which lack either or both of asparaginyl-tRNA or glutaminyl-tRNA synthetases. The reaction takes place in the presence of glutamine and ATP through an activated phospho-Asp-tRNA(Asn) or phospho-Glu-tRNA(Gln). This Caulobacter vibrioides (strain ATCC 19089 / CIP 103742 / CB 15) (Caulobacter crescentus) protein is Aspartyl/glutamyl-tRNA(Asn/Gln) amidotransferase subunit B.